A 150-amino-acid polypeptide reads, in one-letter code: Protein-export protein SecB (150 aa).

It belongs to the SecB family. As to quaternary structure, homotetramer, a dimer of dimers. One homotetramer interacts with 1 SecA dimer.

The protein resides in the cytoplasm. In terms of biological role, one of the proteins required for the normal export of preproteins out of the cell cytoplasm. It is a molecular chaperone that binds to a subset of precursor proteins, maintaining them in a translocation-competent state. It also specifically binds to its receptor SecA. The sequence is that of Protein-export protein SecB from Polaromonas sp. (strain JS666 / ATCC BAA-500).